The chain runs to 65 residues: Large ribosomal subunit protein bL35 (65 aa).

Belongs to the bacterial ribosomal protein bL35 family.

The protein is Large ribosomal subunit protein bL35 of Geobacter sp. (strain M21).